The primary structure comprises 509 residues: 2,3-bisphosphoglycerate-independent phosphoglycerate mutase (509 aa).

Mn(2+) is bound by residues Asp12 and Ser62. The active-site Phosphoserine intermediate is the Ser62. Residues His123, 153–154 (RD), Arg185, Arg191, 260–263 (RPDR), and Lys333 contribute to the substrate site. Residues Asp400, His404, Asp441, His442, and His460 each coordinate Mn(2+).

This sequence belongs to the BPG-independent phosphoglycerate mutase family. Monomer. Requires Mn(2+) as cofactor.

The catalysed reaction is (2R)-2-phosphoglycerate = (2R)-3-phosphoglycerate. It participates in carbohydrate degradation; glycolysis; pyruvate from D-glyceraldehyde 3-phosphate: step 3/5. Catalyzes the interconversion of 2-phosphoglycerate and 3-phosphoglycerate. The chain is 2,3-bisphosphoglycerate-independent phosphoglycerate mutase from Clostridium kluyveri (strain ATCC 8527 / DSM 555 / NBRC 12016 / NCIMB 10680 / K1).